The sequence spans 92 residues: MSAPNPLLAEINKGADLKHTETQDKSAPKIGSDVHIKKNDHASLLSEVEQGAKLKHAETDDKSAPKINENTTIKPNNHSALLGEIKAKAADS.

Disordered stretches follow at residues 1–33 (MSAP…IGSD) and 54–92 (LKHA…AADS). 2 WH2 domains span residues 3-20 (APNP…LKHT) and 40-57 (DHAS…LKHA). 2 stretches are compositionally biased toward basic and acidic residues: residues 13 to 33 (KGAD…IGSD) and 54 to 64 (LKHAETDDKSA). Residues 68-79 (NENTTIKPNNHS) show a composition bias toward polar residues.

Monomer.

Functionally, is able to bind two actin monomers at high concentrations of G-actin. Inhibits actin polymerization by sequestering G-actin and stabilizing actin dimers. The chain is Actobindin-A (abnA) from Dictyostelium discoideum (Social amoeba).